Consider the following 472-residue polypeptide: 3-isopropylmalate dehydratase large subunit (472 aa).

Cys-353, Cys-414, and Cys-417 together coordinate [4Fe-4S] cluster.

The protein belongs to the aconitase/IPM isomerase family. LeuC type 1 subfamily. Heterodimer of LeuC and LeuD. [4Fe-4S] cluster serves as cofactor.

It catalyses the reaction (2R,3S)-3-isopropylmalate = (2S)-2-isopropylmalate. It functions in the pathway amino-acid biosynthesis; L-leucine biosynthesis; L-leucine from 3-methyl-2-oxobutanoate: step 2/4. Functionally, catalyzes the isomerization between 2-isopropylmalate and 3-isopropylmalate, via the formation of 2-isopropylmaleate. This is 3-isopropylmalate dehydratase large subunit from Acinetobacter baumannii (strain AB0057).